A 199-amino-acid polypeptide reads, in one-letter code: NADH-quinone oxidoreductase subunit C (199 aa).

This sequence belongs to the complex I 30 kDa subunit family. In terms of assembly, NDH-1 is composed of 14 different subunits. Subunits NuoB, C, D, E, F, and G constitute the peripheral sector of the complex.

Its subcellular location is the cell inner membrane. It carries out the reaction a quinone + NADH + 5 H(+)(in) = a quinol + NAD(+) + 4 H(+)(out). NDH-1 shuttles electrons from NADH, via FMN and iron-sulfur (Fe-S) centers, to quinones in the respiratory chain. The immediate electron acceptor for the enzyme in this species is believed to be ubiquinone. Couples the redox reaction to proton translocation (for every two electrons transferred, four hydrogen ions are translocated across the cytoplasmic membrane), and thus conserves the redox energy in a proton gradient. The polypeptide is NADH-quinone oxidoreductase subunit C (Paramagnetospirillum magneticum (strain ATCC 700264 / AMB-1) (Magnetospirillum magneticum)).